A 467-amino-acid chain; its full sequence is FK506-binding protein 4 (467 aa).

Disordered stretches follow at residues 64–163 (KATG…GDDD) and 208–357 (GNFV…KPTS). Composition is skewed to acidic residues over residues 71 to 80 (DDDDEEEDEY), 147 to 163 (SDEE…GDDD), and 213 to 254 (PEDD…DELD). 2 stretches are compositionally biased toward basic and acidic residues: residues 271-287 (APKL…RPAE) and 312-332 (QKVE…DKKV). The 87-residue stretch at 381–467 (GDRVGMRYIG…IFDVKLLEIK (87 aa)) folds into the PPIase FKBP-type domain.

The protein belongs to the FKBP-type PPIase family. FKBP3/4 subfamily. Binds to histones H3 and H4.

The protein localises to the nucleus. It carries out the reaction [protein]-peptidylproline (omega=180) = [protein]-peptidylproline (omega=0). Inhibited by both FK506 and rapamycin. In terms of biological role, PPIase that acts as a histone chaperone. Histone proline isomerase that increases the rate of cis-trans isomerization at prolines on the histone H3 N-terminal tail. Proline isomerization influences H3 methylation thereby regulating gene expression. This is FK506-binding protein 4 (fkr-4) from Neurospora crassa (strain ATCC 24698 / 74-OR23-1A / CBS 708.71 / DSM 1257 / FGSC 987).